We begin with the raw amino-acid sequence, 66 residues long: Ocellatin-PT4 (66 aa).

The first 22 residues, 1-22, serve as a signal peptide directing secretion; the sequence is MAFLKKSLFLVLFLGLVSLSIC. A propeptide spanning residues 23 to 39 is cleaved from the precursor; that stretch reads DEEKRQDEDDDDDDDEE. Residue Val66 is modified to Valine amide.

As to expression, expressed by the skin glands.

It is found in the secreted. In terms of biological role, has antibacterial activity against Gram-negative bacteria E.coli ATCC 25922 (MIC=80 uM), K.pneumoniae ATCC 700603 (MIC=310 uM) and S.choleraesuis ATCC 14028 (MIC=310 uM). Shows no hemolytic activity and no cytotoxicity. The sequence is that of Ocellatin-PT4 from Leptodactylus pustulatus (Ceara white-lipped frog).